The primary structure comprises 118 residues: Putative pterin-4-alpha-carbinolamine dehydratase (118 aa).

It belongs to the pterin-4-alpha-carbinolamine dehydratase family.

It catalyses the reaction (4aS,6R)-4a-hydroxy-L-erythro-5,6,7,8-tetrahydrobiopterin = (6R)-L-erythro-6,7-dihydrobiopterin + H2O. This Pseudomonas aeruginosa (strain LESB58) protein is Putative pterin-4-alpha-carbinolamine dehydratase.